Here is a 500-residue protein sequence, read N- to C-terminus: Toluene-4-monooxygenase system, hydroxylase component subunit alpha (500 aa).

Fe cation contacts are provided by Glu104, Glu134, His137, Glu197, Glu231, and His234.

Belongs to the TmoA/XamoA family. The alkene monooxygenase multicomponent enzyme system is composed of an electron transfer component and a monooxygenase component interacting with the effector protein TmoD. The electron transfer component is composed of a ferredoxin reductase (TmoF) and a ferredoxin (TmoC), and the monooxygenase component is formed by a heterohexamer (dimer of heterotrimers) of two alpha subunits (TmoA), two beta subunits (TmoE) and two gamma subunits (TmoB). Fe(2+) serves as cofactor.

The enzyme catalyses toluene + NADH + O2 + H(+) = 4-methylphenol + NAD(+) + H2O. Its pathway is xenobiotic degradation; toluene degradation. Its activity is regulated as follows. Inhibited by Zn(2+) and Cu(2+). Functionally, component of the toluene-4-monooxygenase multicomponent enzyme system which catalyzes the O2- and NADH-dependent hydroxylation of toluene to form p-cresol. Also able to convert benzene to phenol, catechol, and 1,2,3-trihydroxybenzene by successive hydroxylations. In Ectopseudomonas mendocina (Pseudomonas mendocina), this protein is Toluene-4-monooxygenase system, hydroxylase component subunit alpha.